Reading from the N-terminus, the 169-residue chain is E1B protein, small T-antigen (169 aa).

The protein belongs to the adenoviridae E1B 19 kDa protein family.

The polypeptide is E1B protein, small T-antigen (Canis lupus familiaris (Dog)).